A 242-amino-acid chain; its full sequence is Copper transport protein B (242 aa).

Transmembrane regions (helical) follow at residues 8 to 28 (ICLC…ACVL) and 86 to 106 (ITGP…TAGY). Positions 153–175 (ESATTNVPSSQTPNESSPLVAGR) are disordered. Residues 154 to 169 (SATTNVPSSQTPNESS) show a composition bias toward polar residues. 2 helical membrane passes run 187–207 (IILA…MLLF) and 210–230 (YNGF…LVFG).

The protein belongs to the copper transporter (Ctr) (TC 1.A.56) family. SLC31A subfamily.

Its subcellular location is the membrane. Functionally, transporter that is probably involved in the transport of copper, even if it does not act as a major copper transporter. The sequence is that of Copper transport protein B from Aspergillus fumigatus (strain ATCC MYA-4609 / CBS 101355 / FGSC A1100 / Af293) (Neosartorya fumigata).